The primary structure comprises 318 residues: Ribose-phosphate pyrophosphokinase 1 (318 aa).

Residues 43–45 (DGE) and 102–103 (RQ) contribute to the ATP site. Mg(2+) contacts are provided by histidine 136 and aspartate 176. Residue lysine 199 is part of the active site. Residues arginine 201, aspartate 225, and 229-233 (DTAGT) contribute to the D-ribose 5-phosphate site.

Belongs to the ribose-phosphate pyrophosphokinase family. Class I subfamily. In terms of assembly, homohexamer. Mg(2+) serves as cofactor.

Its subcellular location is the cytoplasm. It catalyses the reaction D-ribose 5-phosphate + ATP = 5-phospho-alpha-D-ribose 1-diphosphate + AMP + H(+). The protein operates within metabolic intermediate biosynthesis; 5-phospho-alpha-D-ribose 1-diphosphate biosynthesis; 5-phospho-alpha-D-ribose 1-diphosphate from D-ribose 5-phosphate (route I): step 1/1. Its function is as follows. Involved in the biosynthesis of the central metabolite phospho-alpha-D-ribosyl-1-pyrophosphate (PRPP) via the transfer of pyrophosphoryl group from ATP to 1-hydroxyl of ribose-5-phosphate (Rib-5-P). In Listeria monocytogenes serotype 4b (strain F2365), this protein is Ribose-phosphate pyrophosphokinase 1.